We begin with the raw amino-acid sequence, 252 residues long: Major prion protein (252 aa).

Positions 1–28 are cleaved as a signal peptide; sequence MAHLGYWMLLLFVATWSDVGLCKKRPKP. Residues 23–229 are interaction with GRB2, ERI3 and SYN1; it reads KKRPKPGGGW…ESQAAYQRAA (207 aa). Residues 26 to 109 form a disordered region; sequence PKPGGGWNTG…KPSKPKTSMK (84 aa). 5 tandem repeats follow at residues 51–59, 60–67, 68–75, 76–83, and 84–92. Residues 51 to 92 are 5 X 8 AA tandem repeats of P-H-G-G-G-W-G-Q; it reads PPQGGGWGQPHGGGWGQPHGGGWGQPHGGGWGQPHGGGWGQG. Positions 53–93 are enriched in gly residues; sequence QGGGWGQPHGGGWGQPHGGGWGQPHGGGWGQPHGGGWGQGG. H61, G62, G63, H69, G70, G71, H77, G78, G79, H85, G86, and G87 together coordinate Cu(2+). The cysteines at positions 178 and 213 are disulfide-linked. Residues N180 and N196 are each glycosylated (N-linked (GlcNAc...) asparagine). A lipid anchor (GPI-anchor amidated alanine) is attached at A229. Positions 230-252 are cleaved as a propeptide — removed in mature form; it reads GVLLFSSPPVILLISFLIFLIVG.

The protein belongs to the prion family. As to quaternary structure, monomer and homodimer. Has a tendency to aggregate into amyloid fibrils containing a cross-beta spine, formed by a steric zipper of superposed beta-strands. Soluble oligomers may represent an intermediate stage on the path to fibril formation. Copper binding may promote oligomerization. Interacts with GRB2, APP, ERI3/PRNPIP and SYN1. Mislocalized cytosolically exposed PrP interacts with MGRN1; this interaction alters MGRN1 subcellular location and causes lysosomal enlargement. Interacts with KIAA1191.

It localises to the cell membrane. It is found in the golgi apparatus. In terms of biological role, its primary physiological function is unclear. Has cytoprotective activity against internal or environmental stresses. May play a role in neuronal development and synaptic plasticity. May be required for neuronal myelin sheath maintenance. May play a role in iron uptake and iron homeostasis. Soluble oligomers are toxic to cultured neuroblastoma cells and induce apoptosis (in vitro). Association with GPC1 (via its heparan sulfate chains) targets PRNP to lipid rafts. Also provides Cu(2+) or Zn(2+) for the ascorbate-mediated GPC1 deaminase degradation of its heparan sulfate side chains. The sequence is that of Major prion protein (PRNP) from Oryctolagus cuniculus (Rabbit).